Reading from the N-terminus, the 185-residue chain is Ribosome-recycling factor (185 aa).

This sequence belongs to the RRF family.

It is found in the cytoplasm. Its function is as follows. Responsible for the release of ribosomes from messenger RNA at the termination of protein biosynthesis. May increase the efficiency of translation by recycling ribosomes from one round of translation to another. In Chloroflexus aggregans (strain MD-66 / DSM 9485), this protein is Ribosome-recycling factor.